Consider the following 495-residue polypeptide: Protein BFR2 (495 aa).

2 disordered regions span residues 10-155 and 462-495; these read ISQL…DSSA and FNED…RIFG. Residues 23 to 45 show a composition bias toward acidic residues; that stretch reads IENFEDRDDGSESGGDVDYDSDL. Basic and acidic residues predominate over residues 46–62; that stretch reads ATEHYVKVGKSKLRDDA. Over residues 81 to 151 the composition is skewed to acidic residues; that stretch reads DDEDEDGDGA…SDEELSENEN (71 aa).

Belongs to the AATF family.

It is found in the nucleus. It localises to the nucleolus. The polypeptide is Protein BFR2 (BFR2) (Yarrowia lipolytica (strain CLIB 122 / E 150) (Yeast)).